The primary structure comprises 131 residues: L-ectoine synthase (131 aa).

Belongs to the ectoine synthase family.

The catalysed reaction is (2S)-4-acetamido-2-aminobutanoate = L-ectoine + H2O. It functions in the pathway amine and polyamine biosynthesis; ectoine biosynthesis; L-ectoine from L-aspartate 4-semialdehyde: step 3/3. Functionally, catalyzes the circularization of gamma-N-acetyl-alpha,gamma-diaminobutyric acid (ADABA) to ectoine (1,4,5,6-tetrahydro-2-methyl-4-pyrimidine carboxylic acid), which is an excellent osmoprotectant. The sequence is that of L-ectoine synthase from Nocardia farcinica (strain IFM 10152).